A 543-amino-acid polypeptide reads, in one-letter code: Phosphoenolpyruvate carboxykinase (ATP) (543 aa).

Position 244–251 (244–251 (GLSGTGKT)) interacts with ATP.

It belongs to the phosphoenolpyruvate carboxykinase (ATP) family.

It catalyses the reaction oxaloacetate + ATP = phosphoenolpyruvate + ADP + CO2. The protein operates within carbohydrate biosynthesis; gluconeogenesis. In Kluyveromyces lactis (strain ATCC 8585 / CBS 2359 / DSM 70799 / NBRC 1267 / NRRL Y-1140 / WM37) (Yeast), this protein is Phosphoenolpyruvate carboxykinase (ATP) (PCK1).